A 356-amino-acid polypeptide reads, in one-letter code: Popeye domain-containing protein 1 (356 aa).

At 1-48 (MNFTEPSPLAQSTVVGFLPELESLTPVPSNETSCENWREVHHLVFHAA) the chain is on the extracellular side. N2 and N30 each carry an N-linked (GlcNAc...) asparagine glycan. The chain crosses the membrane as a helical span at residues 49-69 (NVCFAVGLLIPTTLHLHMILL). Residue R70 is a topological domain, cytoplasmic. The chain crosses the membrane as a helical span at residues 71–91 (VMLSIGCTLYVVWATLYRCAL). D92 is a topological domain (extracellular). Residues 93 to 113 (MMIWNSVFLGINILHLSYLLY) traverse the membrane as a helical segment. Positions 93-115 (MMIWNSVFLGINILHLSYLLYKK) are required for interaction with CAV3. Residues 114–356 (KKRPVKIEKD…VPVSPAHQLP (243 aa)) lie on the Cytoplasmic side of the membrane. The segment at 136–186 (RVPPDLFRRLTGQFCVIQTLKRGQVYATEDKTSVDDRLSILLKGRMKVSYR) is required for interaction with KCNK2. 2 positions are modified to phosphoserine: S295 and S318. Residues 313–323 (SSSTASLPMSS) are compositionally biased toward low complexity. The disordered stretch occupies residues 313 to 356 (SSSTASLPMSSPQQRASPKMKPIEEGLEDDDEVFVPVSPAHQLP).

This sequence belongs to the popeye family. Homodimer. Homodimerization requires the C-terminus cytoplasmic region. Interacts (via the C-terminus cytoplasmic tail) with TJP1. Interacts (via the C-terminus cytoplasmic tail) with ARHGEF25/GEFT (via the DH domain). Interacts (via the C-terminus cytoplasmic tail) with VAMP3. Interacts with KCNK2; the interaction enhances KCNK2 surface expression and is inhibited by cAMP. Interacts with CAV3. As to expression, strongly expressed in heart and skeletal muscle. Weakly expressed in brain, spleen, liver, kidney and lung.

The protein localises to the lateral cell membrane. The protein resides in the cell junction. Its subcellular location is the tight junction. It localises to the membrane. It is found in the cell membrane. The protein localises to the sarcolemma. The protein resides in the caveola. In terms of biological role, cell adhesion molecule involved in the establishment and/or maintenance of cell integrity. Involved in the formation and regulation of the tight junction (TJ) paracellular permeability barrier in epithelial cells. Plays a role in VAMP3-mediated vesicular transport and recycling of different receptor molecules through its interaction with VAMP3. Plays a role in the regulation of cell shape and movement by modulating the Rho-family GTPase activity through its interaction with ARHGEF25/GEFT. Induces primordial adhesive contact and aggregation of epithelial cells in a Ca(2+)-independent manner. Important for skeletal muscle and heart development. Also involved in striated muscle regeneration and repair and in the regulation of cell spreading. Important for the maintenance of cardiac function. Plays a regulatory function in heart rate dynamics mediated, at least in part, through cAMP-binding and, probably, by increasing cell surface expression of the potassium channel KCNK2 and enhancing current density. Is a caveolae-associated protein important for the preservation of caveolae structural and functional integrity as well as for heart protection against ischemia injury. This Rattus norvegicus (Rat) protein is Popeye domain-containing protein 1 (Popdc1).